An 843-amino-acid polypeptide reads, in one-letter code: Glycogen phosphorylase, brain form (843 aa).

A2 carries the N-acetylalanine modification. Phosphoserine; by PHK; in form phosphorylase A is present on S15. AMP contacts are provided by D43, Y197, and R310. Y197 carries the post-translational modification Phosphotyrosine. Y473 is modified (phosphotyrosine). K569 is a pyridoxal 5'-phosphate binding site. Residues 677–678 (TG) are pyridoxal 5'-phosphate. At K681 the chain carries N6-(pyridoxal phosphate)lysine.

The protein belongs to the glycogen phosphorylase family. In terms of assembly, homodimer. Dimers associate into a tetramer to form the enzymatically active phosphorylase A. Pyridoxal 5'-phosphate serves as cofactor. In terms of processing, phosphorylation of Ser-15 converts phosphorylase B (unphosphorylated) to phosphorylase A.

The enzyme catalyses [(1-&gt;4)-alpha-D-glucosyl](n) + phosphate = [(1-&gt;4)-alpha-D-glucosyl](n-1) + alpha-D-glucose 1-phosphate. Its activity is regulated as follows. Activity of phosphorylase is controlled both by allosteric means (through the non-covalent binding of metabolites) and by covalent modification. Thus AMP allosterically activates, whereas ATP, ADP, and glucose-6-phosphate allosterically inhibit, phosphorylase B. Its function is as follows. Glycogen phosphorylase that regulates glycogen mobilization. Phosphorylase is an important allosteric enzyme in carbohydrate metabolism. Enzymes from different sources differ in their regulatory mechanisms and in their natural substrates. However, all known phosphorylases share catalytic and structural properties. The polypeptide is Glycogen phosphorylase, brain form (PYGB) (Pongo abelii (Sumatran orangutan)).